The sequence spans 329 residues: Tetraacyldisaccharide 4'-kinase (329 aa).

58–65 (SVGGTGKT) contributes to the ATP binding site.

It belongs to the LpxK family.

The enzyme catalyses a lipid A disaccharide + ATP = a lipid IVA + ADP + H(+). It participates in glycolipid biosynthesis; lipid IV(A) biosynthesis; lipid IV(A) from (3R)-3-hydroxytetradecanoyl-[acyl-carrier-protein] and UDP-N-acetyl-alpha-D-glucosamine: step 6/6. Transfers the gamma-phosphate of ATP to the 4'-position of a tetraacyldisaccharide 1-phosphate intermediate (termed DS-1-P) to form tetraacyldisaccharide 1,4'-bis-phosphate (lipid IVA). This chain is Tetraacyldisaccharide 4'-kinase, found in Idiomarina loihiensis (strain ATCC BAA-735 / DSM 15497 / L2-TR).